A 269-amino-acid polypeptide reads, in one-letter code: MFDFMTLEKVREKGPLVHNITNIVVANDSANGLLAIGASPIMASAKEEMDELAKMADVLVINIGTLDGELVEAMKIAGRAANVAGTPVVLDPVGVGATSYRRKVVQELLAEIQFTAIRGNAGELAAIAGEAWEAKGVDAGVGSADVLSIAEKVANEWSTVVIISGEVDVISDGTRFAKVANGSALLPRITGSGCLLSAVCGSFIAVQDDAFRASVEACASYAVASEYAELELERKLPGSFRPLFLDALASWSVEKTHAKAKIQESGEHK.

Met-42 contributes to the substrate binding site. Arg-118 and Ser-164 together coordinate ATP. Residue Gly-191 coordinates substrate.

Belongs to the Thz kinase family. The cofactor is Mg(2+).

It carries out the reaction 5-(2-hydroxyethyl)-4-methylthiazole + ATP = 4-methyl-5-(2-phosphooxyethyl)-thiazole + ADP + H(+). The protein operates within cofactor biosynthesis; thiamine diphosphate biosynthesis; 4-methyl-5-(2-phosphoethyl)-thiazole from 5-(2-hydroxyethyl)-4-methylthiazole: step 1/1. Its function is as follows. Catalyzes the phosphorylation of the hydroxyl group of 4-methyl-5-beta-hydroxyethylthiazole (THZ). This chain is Hydroxyethylthiazole kinase, found in Listeria monocytogenes serotype 4a (strain HCC23).